We begin with the raw amino-acid sequence, 315 residues long: Transposase for insertion sequence element IS640 (315 aa).

Residues 5–66 (EDFYMIKQMR…PFMDYIDMRL (62 aa)) enclose the HTH IS21-type domain. The Integrase catalytic domain occupies 111–285 (FETQPGYQLQ…TPEQRSRWSR (175 aa)).

The protein belongs to the transposase IS21/IS408/IS1162 family.

Functionally, involved in the transposition of the insertion sequence. The protein is Transposase for insertion sequence element IS640 (istA) of Shigella sonnei.